Consider the following 106-residue polypeptide: ATP-dependent Clp protease adapter protein ClpS (106 aa).

The segment at 1–22 (MTDEPNQDDPQGPEVEAAKPSL) is disordered.

It belongs to the ClpS family. As to quaternary structure, binds to the N-terminal domain of the chaperone ClpA.

Functionally, involved in the modulation of the specificity of the ClpAP-mediated ATP-dependent protein degradation. The polypeptide is ATP-dependent Clp protease adapter protein ClpS (Halorhodospira halophila (strain DSM 244 / SL1) (Ectothiorhodospira halophila (strain DSM 244 / SL1))).